Reading from the N-terminus, the 75-residue chain is Small ribosomal subunit protein bS18 (75 aa).

Belongs to the bacterial ribosomal protein bS18 family. Part of the 30S ribosomal subunit. Forms a tight heterodimer with protein bS6.

In terms of biological role, binds as a heterodimer with protein bS6 to the central domain of the 16S rRNA, where it helps stabilize the platform of the 30S subunit. This is Small ribosomal subunit protein bS18 from Acinetobacter baumannii (strain AB307-0294).